The following is a 292-amino-acid chain: Homoserine kinase (292 aa).

ATP is bound at residue 81–91; that stretch reads RPKSGLGSSGA.

Belongs to the GHMP kinase family. Homoserine kinase subfamily.

Its subcellular location is the cytoplasm. It catalyses the reaction L-homoserine + ATP = O-phospho-L-homoserine + ADP + H(+). It participates in amino-acid biosynthesis; L-threonine biosynthesis; L-threonine from L-aspartate: step 4/5. Its function is as follows. Catalyzes the ATP-dependent phosphorylation of L-homoserine to L-homoserine phosphate. The polypeptide is Homoserine kinase (Pyrococcus furiosus (strain ATCC 43587 / DSM 3638 / JCM 8422 / Vc1)).